An 836-amino-acid chain; its full sequence is DNA gyrase subunit A (836 aa).

Positions 34-500 constitute a Topo IIA-type catalytic domain; sequence LPDARDGLKP…AGDVRDIEDI (467 aa). Tyr-122 acts as the O-(5'-phospho-DNA)-tyrosine intermediate in catalysis. Positions 527 to 533 match the GyrA-box motif; the sequence is QKRGGQG.

Belongs to the type II topoisomerase GyrA/ParC subunit family. As to quaternary structure, heterotetramer, composed of two GyrA and two GyrB chains. In the heterotetramer, GyrA contains the active site tyrosine that forms a transient covalent intermediate with DNA, while GyrB binds cofactors and catalyzes ATP hydrolysis.

It localises to the cytoplasm. The catalysed reaction is ATP-dependent breakage, passage and rejoining of double-stranded DNA.. Its function is as follows. A type II topoisomerase that negatively supercoils closed circular double-stranded (ds) DNA in an ATP-dependent manner to modulate DNA topology and maintain chromosomes in an underwound state. Negative supercoiling favors strand separation, and DNA replication, transcription, recombination and repair, all of which involve strand separation. Also able to catalyze the interconversion of other topological isomers of dsDNA rings, including catenanes and knotted rings. Type II topoisomerases break and join 2 DNA strands simultaneously in an ATP-dependent manner. The polypeptide is DNA gyrase subunit A (Chlamydia trachomatis serovar D (strain ATCC VR-885 / DSM 19411 / UW-3/Cx)).